The primary structure comprises 356 residues: Stomatin-like protein 2, mitochondrial (356 aa).

Residues 1-28 (MLARAARGTGALLLKGSVQASARAPRRA) constitute a mitochondrion transit peptide. S17 carries the post-translational modification Phosphoserine; by PKC/PRKCZ. Y124 carries the phosphotyrosine modification. K145 carries the N6-acetyllysine; alternate modification. The residue at position 145 (K145) is an N6-succinyllysine; alternate. Positions 215–252 (INVAEGKKQAQILASEAEKAEQINQAAGEASAVLAKAK) form a coiled coil. The residue at position 233 (K233) is an N6-acetyllysine. The disordered stretch occupies residues 326–356 (EAQDSVSSRSSRDVRSTDASLDEELDRVKLS). S330 carries the post-translational modification Phosphoserine.

It belongs to the band 7/mec-2 family. Forms homooligomers. Interacts with MFN2; may form heterooligomers with this mediator of mitochondrial fusion. Interacts with PHB1 and PHB2; stabilizes and recruits them to cardiolipin-enriched mitochondrial membranes. Interacts with CACNA2D2.

The protein resides in the cell membrane. It localises to the mitochondrion. The protein localises to the mitochondrion inner membrane. It is found in the mitochondrion intermembrane space. Its subcellular location is the membrane raft. The protein resides in the cytoplasm. It localises to the cytoskeleton. Functionally, mitochondrial protein that probably regulates the biogenesis and the activity of mitochondria. Stimulates cardiolipin biosynthesis, binds cardiolipin-enriched membranes where it recruits and stabilizes some proteins including prohibitin and may therefore act in the organization of functional microdomains in mitochondrial membranes. Through regulation of the mitochondrial function may play a role into several biological processes including cell migration, cell proliferation, T-cell activation, calcium homeostasis and cellular response to stress. May play a role in calcium homeostasis through negative regulation of calcium efflux from mitochondria. Required for mitochondrial hyperfusion a pro-survival cellular response to stress which results in increased ATP production by mitochondria. May also regulate the organization of functional domains at the plasma membrane and play a role in T-cell activation through association with the T-cell receptor signaling complex and its regulation. In Bos taurus (Bovine), this protein is Stomatin-like protein 2, mitochondrial (STOML2).